A 425-amino-acid chain; its full sequence is Protein disulfide isomerase-like 5-3 (425 aa).

Residues 1–28 (MGKPTLPPVVVVVVLLLLVVVLPATTCG) form the signal peptide. One can recognise a Thioredoxin domain in the interval 29–153 (ADAGGGGEAE…LVENLKKLVA (125 aa)). Residues Cys-75 and Cys-78 each act as nucleophile in the active site. Cys-75 and Cys-78 are oxidised to a cystine. Residues 386-406 (LLGVNAVYILVFLVAVLVLLM) form a helical membrane-spanning segment.

This sequence belongs to the protein disulfide isomerase family.

It is found in the membrane. Acts as a protein-folding catalyst that interacts with nascent polypeptides to catalyze the formation, isomerization, and reduction or oxidation of disulfide bonds. May play a role in storage protein biogenesis. This chain is Protein disulfide isomerase-like 5-3 (PDIL5-3), found in Oryza sativa subsp. japonica (Rice).